Reading from the N-terminus, the 91-residue chain is M-myrmeciitoxin-Mb3a (91 aa).

An N-terminal signal peptide occupies residues 1-21 (MKLSCLSLALAIILILAIVHS). Positions 22–54 (PNMEVKALADPEADAFGEANAFGEADAFAEANA) are excised as a propeptide.

As to quaternary structure, homodimer; disulfide-linked. In terms of tissue distribution, expressed by the venom gland and reservoir.

It localises to the secreted. Causes a significant and dose-dependent histamine release, probably by influencing the signal transduction of mast cells through a non-IgE-mediated pathway. This peptide does not have cytotoxic activities. This is M-myrmeciitoxin-Mb3a from Myrmecia banksi (Jack jumper ant).